A 282-amino-acid polypeptide reads, in one-letter code: Bifunctional protein FolD (282 aa).

NADP(+)-binding positions include 164-166 (GRS) and S189.

Belongs to the tetrahydrofolate dehydrogenase/cyclohydrolase family. In terms of assembly, homodimer.

It catalyses the reaction (6R)-5,10-methylene-5,6,7,8-tetrahydrofolate + NADP(+) = (6R)-5,10-methenyltetrahydrofolate + NADPH. It carries out the reaction (6R)-5,10-methenyltetrahydrofolate + H2O = (6R)-10-formyltetrahydrofolate + H(+). Its pathway is one-carbon metabolism; tetrahydrofolate interconversion. Its function is as follows. Catalyzes the oxidation of 5,10-methylenetetrahydrofolate to 5,10-methenyltetrahydrofolate and then the hydrolysis of 5,10-methenyltetrahydrofolate to 10-formyltetrahydrofolate. The sequence is that of Bifunctional protein FolD from Streptococcus suis (strain 05ZYH33).